We begin with the raw amino-acid sequence, 259 residues long: Tryptophan synthase alpha chain (259 aa).

Residues Glu-48 and Asp-59 each act as proton acceptor in the active site.

The protein belongs to the TrpA family. Tetramer of two alpha and two beta chains.

The catalysed reaction is (1S,2R)-1-C-(indol-3-yl)glycerol 3-phosphate + L-serine = D-glyceraldehyde 3-phosphate + L-tryptophan + H2O. It functions in the pathway amino-acid biosynthesis; L-tryptophan biosynthesis; L-tryptophan from chorismate: step 5/5. Its function is as follows. The alpha subunit is responsible for the aldol cleavage of indoleglycerol phosphate to indole and glyceraldehyde 3-phosphate. The chain is Tryptophan synthase alpha chain from Syntrophomonas wolfei subsp. wolfei (strain DSM 2245B / Goettingen).